The chain runs to 62 residues: Large ribosomal subunit protein bL32 (62 aa).

Positions 1–18 (MGVPKKRTSKMRRDRRRA) are enriched in basic residues. Positions 1-22 (MGVPKKRTSKMRRDRRRAANNN) are disordered.

This sequence belongs to the bacterial ribosomal protein bL32 family.

The sequence is that of Large ribosomal subunit protein bL32 from Myxococcus xanthus (strain DK1622).